Here is a 404-residue protein sequence, read N- to C-terminus: NADH-quinone oxidoreductase subunit D (404 aa).

The protein belongs to the complex I 49 kDa subunit family. As to quaternary structure, NDH-1 is composed of 14 different subunits. Subunits NuoB, C, D, E, F, and G constitute the peripheral sector of the complex.

Its subcellular location is the cell inner membrane. It carries out the reaction a quinone + NADH + 5 H(+)(in) = a quinol + NAD(+) + 4 H(+)(out). Functionally, NDH-1 shuttles electrons from NADH, via FMN and iron-sulfur (Fe-S) centers, to quinones in the respiratory chain. The immediate electron acceptor for the enzyme in this species is believed to be ubiquinone. Couples the redox reaction to proton translocation (for every two electrons transferred, four hydrogen ions are translocated across the cytoplasmic membrane), and thus conserves the redox energy in a proton gradient. This Dinoroseobacter shibae (strain DSM 16493 / NCIMB 14021 / DFL 12) protein is NADH-quinone oxidoreductase subunit D.